Reading from the N-terminus, the 861-residue chain is DNA mismatch repair protein MutS (861 aa).

An ATP-binding site is contributed by 618–625 (GPNMGGKS).

This sequence belongs to the DNA mismatch repair MutS family.

This protein is involved in the repair of mismatches in DNA. It is possible that it carries out the mismatch recognition step. This protein has a weak ATPase activity. The sequence is that of DNA mismatch repair protein MutS from Shewanella sp. (strain ANA-3).